Here is a 190-residue protein sequence, read N- to C-terminus: Elongation factor P-like protein (190 aa).

It belongs to the elongation factor P family.

This Cronobacter sakazakii (strain ATCC BAA-894) (Enterobacter sakazakii) protein is Elongation factor P-like protein.